Consider the following 266-residue polypeptide: Prolactin-7A1 (266 aa).

A signal peptide spans 1–30 (MPLSFTQPCSSGALLLLVVSNLLLWENVAC). N-linked (GlcNAc...) asparagine glycosylation is found at asparagine 36, asparagine 58, asparagine 110, asparagine 149, and asparagine 157. Disulfide bonds link cysteine 114–cysteine 231 and cysteine 248–cysteine 257.

It belongs to the somatotropin/prolactin family. Expressed specifically in the placenta. Detected only in the trophoblast giant cells.

The protein resides in the secreted. The polypeptide is Prolactin-7A1 (Prl7a1) (Mus musculus (Mouse)).